The chain runs to 46 residues: Defensin-like protein 2 (46 aa).

Intrachain disulfides connect Cys3/Cys46, Cys13/Cys33, Cys19/Cys40, and Cys23/Cys42.

Monomer. As to expression, present in seeds, cotyledons and leaves. Not found in roots or stems.

Its function is as follows. Has antibacterial activity against the Gram-positive bacterium S.aureus and the Gram-negative bacteria E.coli and P.syringae. Does not have antibacterial activity against the phytopathogenic bacteria R.solanacearum, Rhataybacter sp and Erwinia sp. Does not inhibit trypsin, chymotrypsin or alpha-amylases. The sequence is that of Defensin-like protein 2 from Vigna unguiculata (Cowpea).